We begin with the raw amino-acid sequence, 157 residues long: Transcription elongation factor GreA (157 aa).

It belongs to the GreA/GreB family.

Necessary for efficient RNA polymerase transcription elongation past template-encoded arresting sites. The arresting sites in DNA have the property of trapping a certain fraction of elongating RNA polymerases that pass through, resulting in locked ternary complexes. Cleavage of the nascent transcript by cleavage factors such as GreA or GreB allows the resumption of elongation from the new 3'terminus. GreA releases sequences of 2 to 3 nucleotides. The protein is Transcription elongation factor GreA of Phenylobacterium zucineum (strain HLK1).